Here is a 460-residue protein sequence, read N- to C-terminus: RING finger protein DG17 (460 aa).

The segment at cysteine 27–lysine 67 adopts an RING-type zinc-finger fold. 2 consecutive TRAF-type zinc fingers follow at residues serine 141–leucine 194 and threonine 196–glutamine 253. Positions isoleucine 269–serine 294 form a coiled coil. In terms of domain architecture, MATH spans glycine 320–isoleucine 448.

Belongs to the TNF receptor-associated factor family. A subfamily.

The protein resides in the cytoplasm. Its function is as follows. Probable adapter protein and signal transducer that links members of the tumor necrosis factor receptor family to different signaling pathways by association with the receptor cytoplasmic domain and kinases. This is RING finger protein DG17 (zfaA) from Dictyostelium discoideum (Social amoeba).